The sequence spans 451 residues: DNA polymerase IV (451 aa).

The UmuC domain occupies 5–187 (VIHVDMDAFF…LPVGRLWGVG (183 aa)). Mg(2+)-binding residues include Asp-9 and Asp-104. Residue Glu-105 is part of the active site.

The protein belongs to the DNA polymerase type-Y family. As to quaternary structure, monomer. The cofactor is Mg(2+).

It localises to the cytoplasm. It catalyses the reaction DNA(n) + a 2'-deoxyribonucleoside 5'-triphosphate = DNA(n+1) + diphosphate. In terms of biological role, poorly processive, error-prone DNA polymerase involved in untargeted mutagenesis. Copies undamaged DNA at stalled replication forks, which arise in vivo from mismatched or misaligned primer ends. These misaligned primers can be extended by PolIV. Exhibits no 3'-5' exonuclease (proofreading) activity. May be involved in translesional synthesis, in conjunction with the beta clamp from PolIII. The chain is DNA polymerase IV from Corynebacterium diphtheriae (strain ATCC 700971 / NCTC 13129 / Biotype gravis).